We begin with the raw amino-acid sequence, 77 residues long: Large ribosomal subunit protein bL28 (77 aa).

Belongs to the bacterial ribosomal protein bL28 family.

This is Large ribosomal subunit protein bL28 from Verminephrobacter eiseniae (strain EF01-2).